The following is a 316-amino-acid chain: Beta-ketoacyl-[acyl-carrier-protein] synthase III (316 aa).

Catalysis depends on residues Cys-112 and His-243. Positions Gln-244–Arg-248 are ACP-binding. Residue Asn-273 is part of the active site.

The protein belongs to the thiolase-like superfamily. FabH family. In terms of assembly, homodimer.

Its subcellular location is the cytoplasm. It catalyses the reaction malonyl-[ACP] + acetyl-CoA + H(+) = 3-oxobutanoyl-[ACP] + CO2 + CoA. Its pathway is lipid metabolism; fatty acid biosynthesis. Functionally, catalyzes the condensation reaction of fatty acid synthesis by the addition to an acyl acceptor of two carbons from malonyl-ACP. Catalyzes the first condensation reaction which initiates fatty acid synthesis and may therefore play a role in governing the total rate of fatty acid production. Possesses both acetoacetyl-ACP synthase and acetyl transacylase activities. Its substrate specificity determines the biosynthesis of branched-chain and/or straight-chain of fatty acids. The sequence is that of Beta-ketoacyl-[acyl-carrier-protein] synthase III from Histophilus somni (strain 129Pt) (Haemophilus somnus).